The chain runs to 155 residues: uncharacterized protein (155 aa).

The protein belongs to the mimivirus L6/L7/L57 family.

This is an uncharacterized protein from Acanthamoeba polyphaga (Amoeba).